The following is a 540-amino-acid chain: Glucose-6-phosphate isomerase (540 aa).

The active-site Proton donor is the Glu-350. Active-site residues include His-381 and Lys-503.

It belongs to the GPI family.

Its subcellular location is the cytoplasm. The enzyme catalyses alpha-D-glucose 6-phosphate = beta-D-fructose 6-phosphate. It participates in carbohydrate biosynthesis; gluconeogenesis. Its pathway is carbohydrate degradation; glycolysis; D-glyceraldehyde 3-phosphate and glycerone phosphate from D-glucose: step 2/4. Catalyzes the reversible isomerization of glucose-6-phosphate to fructose-6-phosphate. This chain is Glucose-6-phosphate isomerase, found in Burkholderia orbicola (strain MC0-3).